Reading from the N-terminus, the 97-residue chain is Coiled-coil domain-containing protein 167 (97 aa).

Residues 10–79 adopt a coiled-coil conformation; it reads GVALEIDGLE…LRQENRKNML (70 aa). Residues 77-97 traverse the membrane as a helical segment; sequence NMLLSVAIFLLLTVIYAYWAL.

It localises to the membrane. This chain is Coiled-coil domain-containing protein 167 (CCDC167), found in Bos taurus (Bovine).